The primary structure comprises 171 residues: NADH-quinone oxidoreductase subunit I (171 aa).

4Fe-4S ferredoxin-type domains are found at residues 41-71 (LTRDPDGEERCVACNLCSVACPVDCISVVKT) and 81-110 (ESFTINFSRCIMCGFCEEACPTHAIQLTPD). 8 residues coordinate [4Fe-4S] cluster: Cys51, Cys54, Cys57, Cys61, Cys90, Cys93, Cys96, and Cys100.

It belongs to the complex I 23 kDa subunit family. As to quaternary structure, NDH-1 is composed of 13 different subunits. Subunits NuoA, H, J, K, L, M, N constitute the membrane sector of the complex. Requires [4Fe-4S] cluster as cofactor.

It is found in the cell inner membrane. The enzyme catalyses a quinone + NADH + 5 H(+)(in) = a quinol + NAD(+) + 4 H(+)(out). Its function is as follows. NDH-1 shuttles electrons from NADH, via FMN and iron-sulfur (Fe-S) centers, to quinones in the respiratory chain. The immediate electron acceptor for the enzyme in this species is believed to be ubiquinone. Couples the redox reaction to proton translocation (for every two electrons transferred, four hydrogen ions are translocated across the cytoplasmic membrane), and thus conserves the redox energy in a proton gradient. The protein is NADH-quinone oxidoreductase subunit I of Shewanella woodyi (strain ATCC 51908 / MS32).